The chain runs to 843 residues: Probable inorganic carbon transporter subunit DabA 2 (843 aa).

The Zn(2+) site is built by C352, D354, H536, and C551.

It belongs to the inorganic carbon transporter (TC 9.A.2) DabA family. Forms a complex with DabB. It depends on Zn(2+) as a cofactor.

Its subcellular location is the cell inner membrane. Functionally, part of an energy-coupled inorganic carbon pump. The sequence is that of Probable inorganic carbon transporter subunit DabA 2 from Bradyrhizobium sp. (strain BTAi1 / ATCC BAA-1182).